A 216-amino-acid chain; its full sequence is HTH-type transcriptional regulator EthR (216 aa).

Over residues 1–10 (MTTSAASQAS) the composition is skewed to polar residues. The tract at residues 1–24 (MTTSAASQASLPRGRRTARPSGDD) is disordered. The region spanning 23–83 (DDRELAILAT…TLLDRVVNQA (61 aa)) is the HTH tetR-type domain. The H-T-H motif DNA-binding region spans 46–65 (SVDDLAKGAGISRPTFYFYF).

As to quaternary structure, homodimer.

In terms of biological role, involved in the repression of the monooxygenase EthA which is responsible of the formation of the active metabolite of ethionamide (ETH). The protein is HTH-type transcriptional regulator EthR (ethR) of Mycobacterium bovis (strain ATCC BAA-935 / AF2122/97).